Here is a 97-residue protein sequence, read N- to C-terminus: Coiled-coil domain-containing protein 167 (97 aa).

Residues 10 to 79 adopt a coiled-coil conformation; the sequence is GVALEIDGLE…LRQENRKNML (70 aa). Residues 77–97 traverse the membrane as a helical segment; it reads NMLLSVAIFLLLTVIYAYWAL.

The protein resides in the membrane. The polypeptide is Coiled-coil domain-containing protein 167 (CCDC167) (Bos taurus (Bovine)).